A 505-amino-acid chain; its full sequence is Pentatricopeptide repeat-containing protein At2g17033 (505 aa).

3 PPR repeats span residues 243–277 (KTQA…KIKP), 278–312 (GLFE…GHKI), and 313–347 (DTVC…NVPF). The Smr domain occupies 413 to 503 (LDLHGMHLSS…AKGKTVKEWL (91 aa)).

Belongs to the PPR family. P subfamily.

This chain is Pentatricopeptide repeat-containing protein At2g17033, found in Arabidopsis thaliana (Mouse-ear cress).